The chain runs to 536 residues: uncharacterized protein (536 aa).

Disordered stretches follow at residues 1 to 76 and 204 to 237; these read MSFT…SPAS and NWNS…SNKS. 2 stretches are compositionally biased toward low complexity: residues 7-76 and 204-234; these read TSSV…SPAS and NWNS…PSKS. A helical membrane pass occupies residues 247–267; it reads CSVAIPVGVVLILIGLGIFLW. Disordered stretches follow at residues 287–354 and 373–536; these read YGFN…LLGG and DASD…LNLF. The span at 290–326 shows a compositional bias: polar residues; that stretch reads NPNQPSNFRSPNRAPSTNNRYRGWNGSPTPAAGNNTN. Residues 327–350 are compositionally biased toward low complexity; it reads GRPVAPRPSAGAGGANPPAASQPG. Residues 351–371 traverse the membrane as a helical segment; it reads LLGGSSNSAGPIAAATAAGVG. Residues 403–424 are compositionally biased toward polar residues; it reads SASNEAEATMPPSNGSNFSEGL. The segment covering 430–454 has biased composition (low complexity); that stretch reads ESGPAVGAAGAAAEAAEHSGSGSDS. Polar residues predominate over residues 480-509; sequence SYGSRAALSSRSQSNLLSPTSTGASNQPNY. Over residues 517–527 the composition is skewed to low complexity; that stretch reads SSSNVSIPRSS.

It localises to the membrane. This is an uncharacterized protein from Schizosaccharomyces pombe (strain 972 / ATCC 24843) (Fission yeast).